We begin with the raw amino-acid sequence, 514 residues long: Antiseptic resistance protein (514 aa).

At 1-23 (MISFFTKTTDMMTSKKRWTALVV) the chain is on the cytoplasmic side. Residues 24-41 (LAVSLFVVTMDMTILIMA) form a helical membrane-spanning segment. The Extracellular portion of the chain corresponds to 42–57 (LPELVRELEPSGTQQL). A helical membrane pass occupies residues 58 to 75 (WIVDIYSLVLAGFIIPLS). The Cytoplasmic portion of the chain corresponds to 76-86 (AFADKWGRKKA). The chain crosses the membrane as a helical span at residues 87 to 104 (LLTGFALFGLVSLAIFFA). At 105 to 112 (ESAEFVIA) the chain is on the extracellular side. The helical transmembrane segment at 113–130 (IRFLLGIAGALIMPTTLS) threads the bilayer. Residues 131–146 (MIRVIFENPKERATAL) lie on the Cytoplasmic side of the membrane. Residues 147 to 164 (AVWSIASSIGAVFGPIIG) form a helical membrane-spanning segment. Residues 165–172 (GALLEQFS) lie on the Extracellular side of the membrane. The helical transmembrane segment at 173–190 (WHSAFLINVPFAIIAVVA) threads the bilayer. Residues 191–207 (GLFLLPESKLSKEKSHS) lie on the Cytoplasmic side of the membrane. Residues 208–225 (WDIPSTILSIAGMIGLVW) traverse the membrane as a helical segment. The Extracellular segment spans residues 226–237 (SIKEFSKEGLAD). The helical transmembrane segment at 238–255 (IIPWVVIVLAITMIVIFV) threads the bilayer. The Cytoplasmic segment spans residues 256 to 278 (KRNLSSSDPMLDVRLFKKRSFSA). The helical transmembrane segment at 279-295 (GTIAAFMTMFAMASVLL) threads the bilayer. Residues 296 to 315 (LASQWLQVVEELSPFKAGLY) are Extracellular-facing. A helical transmembrane segment spans residues 316–333 (LLPMAIGDMVFAPIAPGL). Topologically, residues 334–341 (AARFGPKI) are cytoplasmic. Residues 342-360 (VLPSGIGIAAIGMFIMYFF) traverse the membrane as a helical segment. The Extracellular portion of the chain corresponds to 361 to 369 (GHPLSYSTM). The chain crosses the membrane as a helical span at residues 370 to 387 (ALALILVGAGMASLAVAS). Over 388-408 (ALIMLETPTSKAGNAAAVEES) the chain is Cytoplasmic. The helical transmembrane segment at 409 to 426 (MYDLGNVFGVAVLGSLSS) threads the bilayer. Over 427–481 (MLYRVFLDISSFSSKGIVGDLAHVAEESVVGAVEVAKATGIKQLANEAVTSFNDA) the chain is Extracellular. Residues 482-499 (FVATALVGGIIMIIISIV) form a helical membrane-spanning segment. Topologically, residues 500 to 514 (VYLLIPKSLDITKQK) are cytoplasmic.

It belongs to the major facilitator superfamily.

It localises to the cell membrane. In terms of biological role, confers export-mediated resistance against antiseptic and disinfectant compounds such as intercalating dyes, quaternary ammonium salts and diamidines. The sequence is that of Antiseptic resistance protein (qacA) from Staphylococcus aureus (strain Mu50 / ATCC 700699).